Consider the following 448-residue polypeptide: Glutamyl-tRNA reductase (448 aa).

Substrate contacts are provided by residues 49 to 52, serine 109, 114 to 116, and glutamine 120; these read TCNR and ETQ. Cysteine 50 acts as the Nucleophile in catalysis. Position 189 to 194 (189 to 194) interacts with NADP(+); sequence GAGEMS.

The protein belongs to the glutamyl-tRNA reductase family. As to quaternary structure, homodimer.

It carries out the reaction (S)-4-amino-5-oxopentanoate + tRNA(Glu) + NADP(+) = L-glutamyl-tRNA(Glu) + NADPH + H(+). It functions in the pathway porphyrin-containing compound metabolism; protoporphyrin-IX biosynthesis; 5-aminolevulinate from L-glutamyl-tRNA(Glu): step 1/2. Its function is as follows. Catalyzes the NADPH-dependent reduction of glutamyl-tRNA(Glu) to glutamate 1-semialdehyde (GSA). This is Glutamyl-tRNA reductase from Staphylococcus aureus (strain MRSA252).